The sequence spans 156 residues: Sensor histidine kinase component HK2 (156 aa).

At 1 to 42 the chain is on the extracellular side; sequence MALVLAAAGAVTVVQFRDAAHEADPDGALRGLTDDITADLVR. A helical transmembrane segment spans residues 43–63; sequence ELVTILPIVLVIAAVAAYLLS. The region spanning 64 to 120 is the HAMP domain; it reads RAALRPVDRIRAAAQTLTTTPHPDTDAPLPVPPTDDEIAWLATTLNTMLTRLQRALA. Topologically, residues 64 to 156 are cytoplasmic; sequence RAALRPVDRI…RCAGPDPPTS (93 aa). Positions 128–156 constitute a Histidine kinase; first part domain; the sequence is DASHELRTPLALLTTELELRCAGPDPPTS. Histidine 131 carries the post-translational modification Phosphohistidine; by autocatalysis.

Homodimer. Each monomer interacts with HK1 and the receiver domain of TcrA. Post-translationally, phosphorylated by HK1.

Its subcellular location is the cell membrane. It carries out the reaction ATP + protein L-histidine = ADP + protein N-phospho-L-histidine.. Functionally, member of the three-protein two-component system HK1/HK2/TcrA. HK2 transfers its phosphoryl group to TcrA. The chain is Sensor histidine kinase component HK2 from Mycobacterium tuberculosis (strain ATCC 25618 / H37Rv).